The following is a 348-amino-acid chain: Dihydroorotase (348 aa).

The Zn(2+) site is built by histidine 17 and histidine 19. Residues 19-21 (HLR) and asparagine 45 contribute to the substrate site. Zn(2+)-binding residues include lysine 103, histidine 140, and histidine 178. Position 103 is an N6-carboxylysine (lysine 103). Residue histidine 140 coordinates substrate. Residue leucine 223 participates in substrate binding. Aspartate 251 contributes to the Zn(2+) binding site. Aspartate 251 is a catalytic residue. Residues histidine 255 and alanine 267 each coordinate substrate.

The protein belongs to the metallo-dependent hydrolases superfamily. DHOase family. Class II DHOase subfamily. In terms of assembly, homodimer. It depends on Zn(2+) as a cofactor.

It carries out the reaction (S)-dihydroorotate + H2O = N-carbamoyl-L-aspartate + H(+). It functions in the pathway pyrimidine metabolism; UMP biosynthesis via de novo pathway; (S)-dihydroorotate from bicarbonate: step 3/3. Its function is as follows. Catalyzes the reversible cyclization of carbamoyl aspartate to dihydroorotate. This chain is Dihydroorotase, found in Enterobacter sp. (strain 638).